Reading from the N-terminus, the 348-residue chain is GTPase Obg (348 aa).

The region spanning 1–159 (MKFLDQARIY…MTLWLRLKLI (159 aa)) is the Obg domain. Positions 160-327 (ADAGLVGLPN…TLQSLLAAID (168 aa)) constitute an OBG-type G domain. Residues 166–173 (GLPNAGKS), 191–195 (FTTLH), 212–215 (DIPG), 279–282 (SKID), and 308–310 (SAA) each bind GTP. Mg(2+)-binding residues include Ser173 and Thr193.

The protein belongs to the TRAFAC class OBG-HflX-like GTPase superfamily. OBG GTPase family. Monomer. Mg(2+) serves as cofactor.

The protein localises to the cytoplasm. Functionally, an essential GTPase which binds GTP, GDP and possibly (p)ppGpp with moderate affinity, with high nucleotide exchange rates and a fairly low GTP hydrolysis rate. Plays a role in control of the cell cycle, stress response, ribosome biogenesis and in those bacteria that undergo differentiation, in morphogenesis control. The protein is GTPase Obg of Beijerinckia indica subsp. indica (strain ATCC 9039 / DSM 1715 / NCIMB 8712).